The primary structure comprises 432 residues: Adenylosuccinate synthetase (432 aa).

GTP-binding positions include 13–19 (GDEGKGK) and 41–43 (GHT). Residue Asp-14 is the Proton acceptor of the active site. Residues Asp-14 and Gly-41 each coordinate Mg(2+). IMP is bound by residues 14–17 (DEGK), 39–42 (NAGH), Thr-130, Arg-144, Gln-225, Thr-240, and Arg-304. His-42 functions as the Proton donor in the catalytic mechanism. Residue 300–306 (ATTGRRR) participates in substrate binding. GTP contacts are provided by residues Arg-306, 332 to 334 (KLD), and 415 to 417 (STG).

It belongs to the adenylosuccinate synthetase family. Homodimer. It depends on Mg(2+) as a cofactor.

Its subcellular location is the cytoplasm. The catalysed reaction is IMP + L-aspartate + GTP = N(6)-(1,2-dicarboxyethyl)-AMP + GDP + phosphate + 2 H(+). The protein operates within purine metabolism; AMP biosynthesis via de novo pathway; AMP from IMP: step 1/2. Plays an important role in the de novo pathway of purine nucleotide biosynthesis. Catalyzes the first committed step in the biosynthesis of AMP from IMP. The protein is Adenylosuccinate synthetase of Salmonella agona (strain SL483).